The chain runs to 122 residues: Large ribosomal subunit protein uL14 (122 aa).

Belongs to the universal ribosomal protein uL14 family. As to quaternary structure, part of the 50S ribosomal subunit. Forms a cluster with proteins L3 and L19. In the 70S ribosome, L14 and L19 interact and together make contacts with the 16S rRNA in bridges B5 and B8.

Functionally, binds to 23S rRNA. Forms part of two intersubunit bridges in the 70S ribosome. The protein is Large ribosomal subunit protein uL14 of Microcystis aeruginosa (strain NIES-843 / IAM M-2473).